Here is a 240-residue protein sequence, read N- to C-terminus: Probable transcriptional regulatory protein HPAG1_0159 (240 aa).

This sequence belongs to the TACO1 family.

It is found in the cytoplasm. The chain is Probable transcriptional regulatory protein HPAG1_0159 from Helicobacter pylori (strain HPAG1).